Reading from the N-terminus, the 99-residue chain is Large ribosomal subunit protein uL23 (99 aa).

Belongs to the universal ribosomal protein uL23 family. As to quaternary structure, part of the 50S ribosomal subunit. Contacts protein L29, and trigger factor when it is bound to the ribosome.

One of the early assembly proteins it binds 23S rRNA. One of the proteins that surrounds the polypeptide exit tunnel on the outside of the ribosome. Forms the main docking site for trigger factor binding to the ribosome. The protein is Large ribosomal subunit protein uL23 of Stenotrophomonas maltophilia (strain R551-3).